The following is a 100-amino-acid chain: U-myrmeciitoxin(01)-Mg7b (100 aa).

The first 17 residues, 1–17 (MKLSCLSLALAIILVLA), serve as a signal peptide directing secretion. Residues 18–50 (IVYSPHMEVKALADAEPDAIGFADAFGEADAEP) constitute a propeptide that is removed on maturation. Ser-85 is a glycosylation site (O-linked (GalNAc...) serine). Residues Thr-94 and Thr-95 are each glycosylated (O-linked (GalNAc...) threonine).

It belongs to the formicidae venom precursor-01 superfamily. Glycosylation is critical to maintaining the aqueous solubility of this protein, but does not directly contribute to its activity. Expressed by the venom gland.

The protein localises to the secreted. It localises to the target cell membrane. In terms of biological role, neurotoxin that triggers pain behavior and inflammation in mammals, and is paralytic and lethal to insects. Causes a time-dependent increase in cell leak current. May act by targeting membranes. This chain is U-myrmeciitoxin(01)-Mg7b, found in Myrmecia gulosa (Red bulldog ant).